Here is a 368-residue protein sequence, read N- to C-terminus: Endoglucanase (368 aa).

Residues 1-21 form the signal peptide; sequence MNVLRSGLVTMLLLAAFSVQA. E55 acts as the Proton donor in catalysis. The Nucleophile role is filled by D116.

Belongs to the glycosyl hydrolase 8 (cellulase D) family.

It is found in the secreted. The catalysed reaction is Endohydrolysis of (1-&gt;4)-beta-D-glucosidic linkages in cellulose, lichenin and cereal beta-D-glucans.. It functions in the pathway glycan metabolism; bacterial cellulose biosynthesis. In terms of biological role, hydrolyzes carboxymethylcellulose. This chain is Endoglucanase (bcsZ), found in Escherichia coli O157:H7.